The following is a 370-amino-acid chain: MASETAFQATGAGRIVISVDAMGGDRGPAAVVAGLAESASAIPGAYFIVHGDEAHLGPMIAKRKDLKGRCEIRHAPRVVTMNDKPSQVMRHGEGTSMWSCIESVRAGEATVAVSCGNTGALMAVSMIRLRKLPGVNRPAIACMWPSRNPGGFNVMLDVGADIKADAEDLAQYALMGASYARNGLSLERPRVGLLNVGTEEHKGRAELKVAQDLISANAAAGAYEFVGFIEGGDIPGRRCDVIVTDGFTGNVALKTGEGTAKLISDFLREAFGANILSKMAAVLALGSLKRLQKRIDPRRVNGGVFLGLNGTVVKSHGSADGTGVAAAIALAARLAQSGFHERLAARLASAGRAGQDAPDEMAAPGRSEKR.

Residues 349–370 (SAGRAGQDAPDEMAAPGRSEKR) form a disordered region.

The protein belongs to the PlsX family. As to quaternary structure, homodimer. Probably interacts with PlsY.

It localises to the cytoplasm. The catalysed reaction is a fatty acyl-[ACP] + phosphate = an acyl phosphate + holo-[ACP]. The protein operates within lipid metabolism; phospholipid metabolism. Catalyzes the reversible formation of acyl-phosphate (acyl-PO(4)) from acyl-[acyl-carrier-protein] (acyl-ACP). This enzyme utilizes acyl-ACP as fatty acyl donor, but not acyl-CoA. The chain is Phosphate acyltransferase from Cereibacter sphaeroides (strain ATCC 17023 / DSM 158 / JCM 6121 / CCUG 31486 / LMG 2827 / NBRC 12203 / NCIMB 8253 / ATH 2.4.1.) (Rhodobacter sphaeroides).